A 78-amino-acid polypeptide reads, in one-letter code: Spermatid-specific protein T1 (78 aa).

The interval 1–21 (MKVAANSSKMLAEKLELMKGG) is hydrophobic. Residues 1–78 (MKVAANSSKM…YSRRRYRRRR (78 aa)) form a disordered region. The span at 20–78 (GGRRRRRRSRRRRRRSRRRSRSPYRRRYRRRRRRRRRRSRRRRYRRRRSYSRRRYRRRR) shows a compositional bias: basic residues.

In terms of processing, phosphorylation occurs at different degrees. The triphosphorylated form may be predominant in T1. SP1 appears to be phosphorylated in elongated spermatids, but dephosphorylated in mature sperm cells. As to expression, testis.

It is found in the nucleus. It localises to the chromosome. In terms of biological role, cuttlefish spermiogenesis is characterized by a double nuclear protein transition: histones -&gt; spermatid-specific proteins (T1/T2) -&gt; protamines (SP1/SP2). The protamines compact sperm DNA into a highly condensed, stable and inactive complex. In Sepia officinalis (Common cuttlefish), this protein is Spermatid-specific protein T1.